Here is a 339-residue protein sequence, read N- to C-terminus: Quinolinate synthase (339 aa).

Iminosuccinate is bound by residues histidine 63 and serine 81. Cysteine 126 serves as a coordination point for [4Fe-4S] cluster. Iminosuccinate is bound by residues 152 to 154 (YVN) and serine 169. Cysteine 211 contributes to the [4Fe-4S] cluster binding site. Residues 237-239 (HPE) and threonine 254 each bind iminosuccinate. Cysteine 297 is a [4Fe-4S] cluster binding site.

This sequence belongs to the quinolinate synthase family. Type 2 subfamily. [4Fe-4S] cluster serves as cofactor.

The protein resides in the cytoplasm. It carries out the reaction iminosuccinate + dihydroxyacetone phosphate = quinolinate + phosphate + 2 H2O + H(+). It functions in the pathway cofactor biosynthesis; NAD(+) biosynthesis; quinolinate from iminoaspartate: step 1/1. Functionally, catalyzes the condensation of iminoaspartate with dihydroxyacetone phosphate to form quinolinate. The protein is Quinolinate synthase of Xylella fastidiosa (strain 9a5c).